The chain runs to 880 residues: Leucine--tRNA ligase (880 aa).

Residues 46–56 (PYPSGALHMGH) carry the 'HIGH' region motif. Residues 483 to 502 (SPIKTEPTWRQTTCPDCGGP) are disordered. The short motif at 638–642 (KMSKS) is the 'KMSKS' region element. Lysine 641 lines the ATP pocket.

It belongs to the class-I aminoacyl-tRNA synthetase family.

Its subcellular location is the cytoplasm. The enzyme catalyses tRNA(Leu) + L-leucine + ATP = L-leucyl-tRNA(Leu) + AMP + diphosphate. This chain is Leucine--tRNA ligase, found in Xanthomonas oryzae pv. oryzae (strain PXO99A).